A 141-amino-acid chain; its full sequence is Large-conductance mechanosensitive channel (141 aa).

3 helical membrane passes run 14-34, 38-58, and 82-102; these read VVDL…VNSL, VIMP…YYIP, and GQFL…FMVI.

It belongs to the MscL family. In terms of assembly, homopentamer.

The protein localises to the cell inner membrane. In terms of biological role, channel that opens in response to stretch forces in the membrane lipid bilayer. May participate in the regulation of osmotic pressure changes within the cell. This chain is Large-conductance mechanosensitive channel, found in Methylorubrum extorquens (strain CM4 / NCIMB 13688) (Methylobacterium extorquens).